A 413-amino-acid polypeptide reads, in one-letter code: Palmitoyl-acyl carrier protein thioesterase, chloroplastic (413 aa).

The transit peptide at 1–57 (MVATAVTSAFFPVTSSPDSSDSKNKKLGSIKSKPSVSSGSLQVKANAQAPPKINGTV) directs the protein to the chloroplast. The tract at residues 12–79 (PVTSSPDSSD…DGASSPPPRT (68 aa)) is disordered. Over residues 29–40 (SIKSKPSVSSGS) the composition is skewed to low complexity. Residues asparagine 310, histidine 312, and cysteine 347 contribute to the active site. A disordered region spans residues 394–413 (WRPKHAKSSANMDQITAKRA).

It belongs to the acyl-ACP thioesterase family.

The protein localises to the plastid. The protein resides in the chloroplast. It catalyses the reaction hexadecanoyl-[ACP] + H2O = hexadecanoate + holo-[ACP] + H(+). Functionally, plays an essential role in chain termination during de novo fatty acid synthesis. High thioesterase activity for palmitoyl-ACP versus other acyl-ACPs. This is Palmitoyl-acyl carrier protein thioesterase, chloroplastic (FATB1) from Gossypium hirsutum (Upland cotton).